The sequence spans 121 residues: UPF0738 protein RBAM_011600 (121 aa).

The protein belongs to the UPF0738 family.

The polypeptide is UPF0738 protein RBAM_011600 (Bacillus velezensis (strain DSM 23117 / BGSC 10A6 / LMG 26770 / FZB42) (Bacillus amyloliquefaciens subsp. plantarum)).